The primary structure comprises 621 residues: DNA-directed RNA polymerase subunit gamma (621 aa).

Asp463, Asp465, and Asp467 together coordinate Mg(2+).

This sequence belongs to the RNA polymerase beta' chain family. RpoC1 subfamily. In cyanobacteria the RNAP catalytic core is composed of 2 alpha, 1 beta, 1 beta', 1 gamma and 1 omega subunit. When a sigma factor is associated with the core the holoenzyme is formed, which can initiate transcription. The cofactor is Mg(2+).

The enzyme catalyses RNA(n) + a ribonucleoside 5'-triphosphate = RNA(n+1) + diphosphate. DNA-dependent RNA polymerase catalyzes the transcription of DNA into RNA using the four ribonucleoside triphosphates as substrates. The sequence is that of DNA-directed RNA polymerase subunit gamma from Nostoc commune.